The chain runs to 439 residues: MAKITIIGAGLAGSEAAWQLAQRNIPVRLYEMRPHTMTPAHQTDHCGELVCSNSLRSDDHSNSAVGLLHQELRGLDSLIMRCADQHRVPAGGALAVDRHAFSAAITEALEQHPLIELIRQEIVTPPMEEDGYTIIASGPLTAGGLAHWIEAQVGKRMAFFDAIAPIVSHDSIDFSKAWKQSRYDKGDGNDYINCAMDEAQYHTFVQALLEGEKVAYKEFEANTPYFDGCLPIEVMAERGVETLRYGPMKPVGLTNPHKAEKSYAIVQLRQDNKLGTLWNMVGFQTKLSWPAQKRIFATIPGLEQAEFVRLGALHRNTFINSPTLLSETLQLKTQPRLLFAGQITGVEGYVESTACGLMAGRIVAHKMRGEAVSIPPQTTALGALMRHITGEADATHFQPMNVNFGLFPNFTERVPKKQRKEAYAQRALTHMQQWLQENS.

Residue glycine 8–glycine 13 participates in FAD binding.

The protein belongs to the MnmG family. TrmFO subfamily. FAD is required as a cofactor.

The protein resides in the cytoplasm. It catalyses the reaction uridine(54) in tRNA + (6R)-5,10-methylene-5,6,7,8-tetrahydrofolate + NADH + H(+) = 5-methyluridine(54) in tRNA + (6S)-5,6,7,8-tetrahydrofolate + NAD(+). It carries out the reaction uridine(54) in tRNA + (6R)-5,10-methylene-5,6,7,8-tetrahydrofolate + NADPH + H(+) = 5-methyluridine(54) in tRNA + (6S)-5,6,7,8-tetrahydrofolate + NADP(+). Functionally, catalyzes the folate-dependent formation of 5-methyl-uridine at position 54 (M-5-U54) in all tRNAs. This chain is Methylenetetrahydrofolate--tRNA-(uracil-5-)-methyltransferase TrmFO, found in Magnetococcus marinus (strain ATCC BAA-1437 / JCM 17883 / MC-1).